The chain runs to 494 residues: Probable cytosol aminopeptidase (494 aa).

Positions 264 and 269 each coordinate Mn(2+). Lysine 276 is a catalytic residue. Mn(2+) is bound by residues aspartate 287, aspartate 346, and glutamate 348. Residue arginine 350 is part of the active site.

The protein belongs to the peptidase M17 family. Mn(2+) is required as a cofactor.

The protein resides in the cytoplasm. It catalyses the reaction Release of an N-terminal amino acid, Xaa-|-Yaa-, in which Xaa is preferably Leu, but may be other amino acids including Pro although not Arg or Lys, and Yaa may be Pro. Amino acid amides and methyl esters are also readily hydrolyzed, but rates on arylamides are exceedingly low.. The catalysed reaction is Release of an N-terminal amino acid, preferentially leucine, but not glutamic or aspartic acids.. Presumably involved in the processing and regular turnover of intracellular proteins. Catalyzes the removal of unsubstituted N-terminal amino acids from various peptides. In Pasteurella multocida (strain Pm70), this protein is Probable cytosol aminopeptidase (pepA).